The chain runs to 156 residues: Small ribosomal subunit protein uS7 (156 aa).

It belongs to the universal ribosomal protein uS7 family. As to quaternary structure, part of the 30S ribosomal subunit. Contacts proteins S9 and S11.

Its function is as follows. One of the primary rRNA binding proteins, it binds directly to 16S rRNA where it nucleates assembly of the head domain of the 30S subunit. Is located at the subunit interface close to the decoding center, probably blocks exit of the E-site tRNA. In Deinococcus radiodurans (strain ATCC 13939 / DSM 20539 / JCM 16871 / CCUG 27074 / LMG 4051 / NBRC 15346 / NCIMB 9279 / VKM B-1422 / R1), this protein is Small ribosomal subunit protein uS7.